An 82-amino-acid chain; its full sequence is UPF0180 protein BAA_1480 (82 aa).

This sequence belongs to the UPF0180 family.

This is UPF0180 protein BAA_1480 from Bacillus anthracis (strain A0248).